Consider the following 342-residue polypeptide: Cystein proteinase inhibitor protein salarin (342 aa).

Positions 1-19 (MKSLVLLLLVAVTVSSVVS) are cleaved as a signal peptide. N-linked (GlcNAc) asparagine glycosylation occurs at N153. T184 carries an O-linked (GlcNAc) threonine glycan.

N-glycosylated, with sialylated biantennary complex-type glycans. In terms of processing, O-glycosylated, with sialylated oligosaccharides.

The protein localises to the cytoplasm. Its subcellular location is the vacuole. In terms of biological role, inhibits papain and ficin (cysteine proteinases) but not trypsin (a serine proteinase). The polypeptide is Cystein proteinase inhibitor protein salarin (salarin) (Salvelinus alpinus (Arctic char)).